The following is a 274-amino-acid chain: Carbonic anhydrase (274 aa).

Zn(2+) contacts are provided by Cys39, His98, and Cys101. The interval 214–274 (EDEYAPHPNS…QAERIYRGSR (61 aa)) is disordered. Basic and acidic residues-rich tracts occupy residues 234-245 (PGKERPGREKAT) and 261-274 (LPREQAERIYRGSR).

The protein belongs to the beta-class carbonic anhydrase family. A hexamer formed by a trimer of dimers. Interacts with the first 260 residues of CcmM; both the N-terminal 206 residues and the C-terminal tail contribute to CcmM binding. Interacts with full-length and the N-terminal 249 residues of CcmM. A probable CcmM-CcaA-CcmN complex as well as a CcaA-RuBisCO-CcmM complex can also be isolated. It depends on Zn(2+) as a cofactor.

It is found in the carboxysome. The enzyme catalyses hydrogencarbonate + H(+) = CO2 + H2O. Inhibited by ethoxyzolamide. Functionally, reversible hydration of carbon dioxide. Essential to photosynthetic carbon dioxide fixation, supplies CO(2) to RuBisCO (ribulose bisphosphate carboxylase, rbcL-rbcS) in the carboxysome. This chain is Carbonic anhydrase, found in Synechocystis sp. (strain ATCC 27184 / PCC 6803 / Kazusa).